A 271-amino-acid chain; its full sequence is Regulatory protein RecX (271 aa).

It belongs to the RecX family.

The protein localises to the cytoplasm. Functionally, modulates RecA activity. The protein is Regulatory protein RecX of Lactobacillus gasseri (strain ATCC 33323 / DSM 20243 / BCRC 14619 / CIP 102991 / JCM 1131 / KCTC 3163 / NCIMB 11718 / NCTC 13722 / AM63).